The primary structure comprises 309 residues: MDESAKTLPPPCLCFCSEKGEDMKVGYDPITPQKEEGAWFGICRDGRLLAATLLLALLSSSFTAMSLYQLAALQADLMNLRMELQSYRGSATPAAAGAPELTAGVKLLTPAAPRPHNSSRGHRNRRAFQGPEETEQDVDLSAPPAPCLPGCRHSQHDDNGMNLRNIIQDCLQLIADSDTPTIRKGTYTFVPWLLSFKRGNALEEKENKIVVRQTGYFFIYSQVLYTDPIFAMGHVIQRKKVHVFGDELSLVTLFRCIQNMPKTLPNNSCYSAGIARLEEGDEIQLAIPRENAQISRNGDDTFFGALKLL.

The Cytoplasmic segment spans residues 1-47 (MDESAKTLPPPCLCFCSEKGEDMKVGYDPITPQKEEGAWFGICRDGR). Residues 48–68 (LLAATLLLALLSSSFTAMSLY) traverse the membrane as a helical; Signal-anchor for type II membrane protein segment. The Extracellular segment spans residues 69 to 309 (QLAALQADLM…DTFFGALKLL (241 aa)). Residues 110–140 (PAAPRPHNSSRGHRNRRAFQGPEETEQDVDL) form a disordered region. N-linked (GlcNAc...) asparagine glycans are attached at residues Asn-117 and Asn-266. Over residues 117–126 (NSSRGHRNRR) the composition is skewed to basic residues. In terms of domain architecture, THD spans 169–308 (DCLQLIADSD…DDTFFGALKL (140 aa)). Cys-256 and Cys-269 are oxidised to a cystine.

It belongs to the tumor necrosis factor family. In terms of assembly, homotrimer. Isoform 2 heteromultimerizes with isoform 1, probably limiting the amount of functional isoform 1 on the cell surface. In terms of processing, the soluble form derives from the membrane form by proteolytic processing. Post-translationally, isoform 2 is not efficiently shed from the membrane unlike isoform 1. Isoform 2 is expressed in many myeloid cell lines.

The protein resides in the cell membrane. Its subcellular location is the secreted. Functionally, cytokine that binds to TNFRSF13B/TACI and TNFRSF17/BCMA. TNFSF13/APRIL binds to the same 2 receptors. Together, they form a 2 ligands -2 receptors pathway involved in the stimulation of B- and T-cell function and the regulation of humoral immunity. A third B-cell specific BAFF-receptor (BAFFR/BR3) promotes the survival of mature B-cells and the B-cell response. Its function is as follows. Isoform 2 seems to inhibit isoform 1 secretion and bioactivity. This is Tumor necrosis factor ligand superfamily member 13B (Tnfsf13b) from Mus musculus (Mouse).